Reading from the N-terminus, the 523-residue chain is Arylsulfatase K (523 aa).

Residues 1–16 (MLRVFVLLIFNVNAYC) form the signal peptide. Ca(2+) is bound by residues Asp-35 and Cys-75. Cys-75 acts as the Nucleophile in catalysis. At Cys-75 the chain carries 3-oxoalanine (Cys). Asn-103 carries N-linked (GlcNAc...) asparagine glycosylation. Residues Lys-123 and His-246 each coordinate substrate. Asn-257 carries N-linked (GlcNAc...) asparagine glycosylation. 2 residues coordinate Ca(2+): Asp-308 and His-309. Asn-405 carries N-linked (GlcNAc...) asparagine glycosylation.

The protein belongs to the sulfatase family. The cofactor is Ca(2+). Post-translationally, the conversion to 3-oxoalanine (also known as C-formylglycine, FGly), of a serine or cysteine residue in prokaryotes and of a cysteine residue in eukaryotes, is critical for catalytic activity.

Its subcellular location is the secreted. It is found in the lysosome. The enzyme catalyses an aryl sulfate + H2O = a phenol + sulfate + H(+). The catalysed reaction is Hydrolysis of the 2-sulfate groups of the 2-O-sulfo-D-glucuronate residues of chondroitin sulfate, heparin and heparitin sulfate.. Catalyzes the hydrolysis of pseudosubstrates such as p-nitrocatechol sulfate and p-nitrophenyl sulfate. Catalyzes the hydrolysis of the 2-sulfate groups of the 2-O-sulfo-D-glucuronate residues of chondroitin sulfate, heparin and heparitin sulfate. Acts selectively on 2-sulfoglucuronate and lacks activity against 2-sulfoiduronate. The polypeptide is Arylsulfatase K (arsk) (Danio rerio (Zebrafish)).